The following is a 365-amino-acid chain: MAKQTPLYDQHVACGARMVDFHGWMMPLHYGSQIDEHHIVRQDAGMFDVSHMTIVDLHGARTREFLRYLLANDVAKLTQPGKALYTAMLNASGGVIDDLIVYFLREDYFRLVVNSATREKDLNWIIQHAEPYQVDVTVRDDLALVAVQGPTAQQKVATLLTSEQQQAIAGMKPFFGIQADDLFIATTGYTGEAGYEIALPKERVVEFWQQLLAAGVKPAGLGARDTLRLEAGMNLYGQEMDEGVSPLAANMGWTVAWLPEDRQFIGREALEQQRANGTEQLVGLIMTEKGVLRNELPVHFSDDSGNQHVGVITSGSFSPTLGFSIALARVPAGIGENAVVQIRNREMPVRVTKPGFVRAGKPVAL.

The protein belongs to the GcvT family. In terms of assembly, the glycine cleavage system is composed of four proteins: P, T, L and H.

It catalyses the reaction N(6)-[(R)-S(8)-aminomethyldihydrolipoyl]-L-lysyl-[protein] + (6S)-5,6,7,8-tetrahydrofolate = N(6)-[(R)-dihydrolipoyl]-L-lysyl-[protein] + (6R)-5,10-methylene-5,6,7,8-tetrahydrofolate + NH4(+). The glycine cleavage system catalyzes the degradation of glycine. This Yersinia enterocolitica serotype O:8 / biotype 1B (strain NCTC 13174 / 8081) protein is Aminomethyltransferase.